The primary structure comprises 595 residues: Phytoene desaturase (595 aa).

Residues 1-23 form the signal peptide; sequence MAETQRPRSAIIVGAGAGGIAVA. The chain crosses the membrane as a helical span at residues 574–594; the sequence is SQRAFPLLVALMGVLYFLLFV.

This sequence belongs to the carotenoid/retinoid oxidoreductase family. Requires NAD(+) as cofactor.

Its subcellular location is the membrane. The catalysed reaction is 15-cis-phytoene + A = all-trans-phytofluene + AH2. The enzyme catalyses all-trans-phytofluene + A = all-trans-zeta-carotene + AH2. It catalyses the reaction all-trans-zeta-carotene + A = all-trans-neurosporene + AH2. It carries out the reaction all-trans-neurosporene + A = all-trans-lycopene + AH2. The catalysed reaction is all-trans-lycopene + A = all-trans-3,4-didehydrolycopene + AH2. It participates in carotenoid biosynthesis; lycopene biosynthesis. Functionally, phytoene desaturase involved in the carotenoid biosynthesis pathway. Converts phytoene into 3,4-didehydrolycopene via the intermediates phytofluene, zeta-carotene, neurosporene and lycopene, by introducing up to five double bonds into phytoene. Is also able to desaturate 1-hydroxyneurosporene into 1-hydroxylycopene and 1-hydroxylycopene into 1-hydroxy-3,4-didehydrolycopene. Gamma-carotene and 1,19-dihydroxylycopene are not accepted as substrates. Neurosporaxanthin is synthesized from geranyl-geranyl pyrophosphate (GGPP) through several enzymatic activities. Phytoene synthase activity performed by the bifunctional enzyme al-2 first produces phytoene from geranyl-geranyl pyrophosphate (GGPP). The phytoene dehydrogenase al-1 then introduces 5 desaturations to lead to 3,4-didehydrolycopene via the intermediates phytofluene, zeta-carotene, neurosporene and lycopene. Al-2 cyclase activity then converts 3,4-didehydrolycopene into torulene. Al-2 can also convet lycopene into gamma-carotene which in turn is converted to beta-carotene by an additional al-2 cyclization reaction. Torulene is the substrate of the dioxidase cao-2 that breaks the molecule, removing five carbon atoms to yield beta-apo-4'-carotenal, whereas the aldehyde dehydrogenase ylo-1 mediates the last step by converting beta-apo-4'-carotenal into neurosporaxanthin. This chain is Phytoene desaturase, found in Neurospora crassa (strain ATCC 24698 / 74-OR23-1A / CBS 708.71 / DSM 1257 / FGSC 987).